The sequence spans 554 residues: CTP synthase (554 aa).

The segment at 1–265 (MTPLIFVTGG…DELVIVQFKL (265 aa)) is amidoligase domain. S13 provides a ligand contact to CTP. UTP is bound at residue S13. Residues 14-19 (SLGKGI) and D71 contribute to the ATP site. Residues D71 and E139 each contribute to the Mg(2+) site. CTP-binding positions include 146–148 (DIE), 186–191 (KTKPTQ), and K222. Residues 186-191 (KTKPTQ) and K222 contribute to the UTP site. Positions 292–545 (TIAVVGKYVD…VRAAREKKAG (254 aa)) constitute a Glutamine amidotransferase type-1 domain. L-glutamine is bound at residue G353. The active-site Nucleophile; for glutamine hydrolysis is the C380. L-glutamine is bound by residues 381-384 (YGMQ), E404, and R471. Active-site residues include H518 and E520.

Belongs to the CTP synthase family. As to quaternary structure, homotetramer.

The enzyme catalyses UTP + L-glutamine + ATP + H2O = CTP + L-glutamate + ADP + phosphate + 2 H(+). The catalysed reaction is L-glutamine + H2O = L-glutamate + NH4(+). It carries out the reaction UTP + NH4(+) + ATP = CTP + ADP + phosphate + 2 H(+). It participates in pyrimidine metabolism; CTP biosynthesis via de novo pathway; CTP from UDP: step 2/2. Its activity is regulated as follows. Allosterically activated by GTP, when glutamine is the substrate; GTP has no effect on the reaction when ammonia is the substrate. The allosteric effector GTP functions by stabilizing the protein conformation that binds the tetrahedral intermediate(s) formed during glutamine hydrolysis. Inhibited by the product CTP, via allosteric rather than competitive inhibition. Functionally, catalyzes the ATP-dependent amination of UTP to CTP with either L-glutamine or ammonia as the source of nitrogen. Regulates intracellular CTP levels through interactions with the four ribonucleotide triphosphates. The protein is CTP synthase of Xanthomonas oryzae pv. oryzae (strain MAFF 311018).